We begin with the raw amino-acid sequence, 709 residues long: Elongation factor G (709 aa).

In terms of domain architecture, tr-type G spans 9–295 (AKVRNIGIMA…AVVRYLPTPL (287 aa)). GTP contacts are provided by residues 18-25 (AHIDAGKT), 86-90 (DTPGH), and 140-143 (NKLD).

The protein belongs to the TRAFAC class translation factor GTPase superfamily. Classic translation factor GTPase family. EF-G/EF-2 subfamily.

The protein localises to the cytoplasm. In terms of biological role, catalyzes the GTP-dependent ribosomal translocation step during translation elongation. During this step, the ribosome changes from the pre-translocational (PRE) to the post-translocational (POST) state as the newly formed A-site-bound peptidyl-tRNA and P-site-bound deacylated tRNA move to the P and E sites, respectively. Catalyzes the coordinated movement of the two tRNA molecules, the mRNA and conformational changes in the ribosome. The polypeptide is Elongation factor G (Streptomyces avermitilis (strain ATCC 31267 / DSM 46492 / JCM 5070 / NBRC 14893 / NCIMB 12804 / NRRL 8165 / MA-4680)).